A 96-amino-acid chain; its full sequence is Fruit-specific protein (96 aa).

Intrachain disulfides connect C59–C75, C63–C78, and C69–C92.

Fruit specific.

This is Fruit-specific protein (2A11) from Solanum lycopersicum (Tomato).